The primary structure comprises 249 residues: Superoxide dismutase 1 copper chaperone (249 aa).

Residues 6–69 (TYEATYAIPM…TLRNCGKDAI (64 aa)) form the HMA domain. Histidine 16 provides a ligand contact to Zn(2+). Cu cation is bound by residues cysteine 17 and cysteine 20. A disulfide bridge links cysteine 27 with cysteine 64. Positions 229 and 231 each coordinate Cu cation.

Belongs to the CCS1 family. In terms of assembly, homodimer, and heterodimer with apo-SOD1. Zinc-binding at His-16 of CCS1 and 'Glu-43' of apo-SOD1 is required for this heterodimerization. Cu(2+) serves as cofactor.

The protein resides in the cytoplasm. Its subcellular location is the mitochondrion intermembrane space. Copper chaperone for apo superoxide dismutase 1 (SOD1). Binds copper ions and delivers them specifically to apo-SOD1. This chain is Superoxide dismutase 1 copper chaperone (CCS1), found in Saccharomyces cerevisiae (strain ATCC 204508 / S288c) (Baker's yeast).